Here is a 103-residue protein sequence, read N- to C-terminus: Stefin-3 (103 aa).

Positions 52–56 match the Secondary area of contact motif; sequence QVVAG.

The protein belongs to the cystatin family.

Its subcellular location is the cytoplasm. Its function is as follows. This is an intracellular thiol proteinase inhibitor. In Mus musculus (Mouse), this protein is Stefin-3 (Stfa3).